The following is a 130-amino-acid chain: MQILQKIKNITLTSLELIHVRLDMARIELVEQKNFLITLLSALFVIFILLLVSFISLLFGLNSLLDPETKQIVFFAISAGAFFLILILLLLMRKILKKQRNFMVDTLTEVKHDIQAIKGALGSPSSKDQE.

The next 2 helical transmembrane spans lie at 35-57 (FLITLLSALFVIFILLLVSFISL) and 72-91 (IVFFAISAGAFFLILILLLL).

The protein localises to the cell membrane. This is an uncharacterized protein from Pasteurella multocida (strain Pm70).